The following is a 448-amino-acid chain: Probable glycine dehydrogenase (decarboxylating) subunit 1 (448 aa).

This sequence belongs to the GcvP family. N-terminal subunit subfamily. The glycine cleavage system is composed of four proteins: P, T, L and H. In this organism, the P 'protein' is a heterodimer of two subunits.

The catalysed reaction is N(6)-[(R)-lipoyl]-L-lysyl-[glycine-cleavage complex H protein] + glycine + H(+) = N(6)-[(R)-S(8)-aminomethyldihydrolipoyl]-L-lysyl-[glycine-cleavage complex H protein] + CO2. Its function is as follows. The glycine cleavage system catalyzes the degradation of glycine. The P protein binds the alpha-amino group of glycine through its pyridoxal phosphate cofactor; CO(2) is released and the remaining methylamine moiety is then transferred to the lipoamide cofactor of the H protein. This chain is Probable glycine dehydrogenase (decarboxylating) subunit 1, found in Bacillus licheniformis (strain ATCC 14580 / DSM 13 / JCM 2505 / CCUG 7422 / NBRC 12200 / NCIMB 9375 / NCTC 10341 / NRRL NRS-1264 / Gibson 46).